The primary structure comprises 677 residues: Methionine--tRNA ligase (677 aa).

A 'HIGH' region motif is present at residues 15–25 (PYANGSIHLGH). The Zn(2+) site is built by Cys-146, Cys-149, Cys-159, and Cys-162. The short motif at 333-337 (KMSKS) is the 'KMSKS' region element. Residue Lys-336 participates in ATP binding. The region spanning 575 to 677 (DFAKVDLRVA…AGAKPGHQVK (103 aa)) is the tRNA-binding domain.

Belongs to the class-I aminoacyl-tRNA synthetase family. MetG type 1 subfamily. In terms of assembly, homodimer. The cofactor is Zn(2+).

Its subcellular location is the cytoplasm. The enzyme catalyses tRNA(Met) + L-methionine + ATP = L-methionyl-tRNA(Met) + AMP + diphosphate. Is required not only for elongation of protein synthesis but also for the initiation of all mRNA translation through initiator tRNA(fMet) aminoacylation. This Escherichia fergusonii (strain ATCC 35469 / DSM 13698 / CCUG 18766 / IAM 14443 / JCM 21226 / LMG 7866 / NBRC 102419 / NCTC 12128 / CDC 0568-73) protein is Methionine--tRNA ligase.